Here is a 255-residue protein sequence, read N- to C-terminus: 5'-nucleotidase SurE (255 aa).

Residues D8, D9, S39, and N91 each contribute to the a divalent metal cation site.

This sequence belongs to the SurE nucleotidase family. Requires a divalent metal cation as cofactor.

The protein resides in the cytoplasm. The enzyme catalyses a ribonucleoside 5'-phosphate + H2O = a ribonucleoside + phosphate. In terms of biological role, nucleotidase that shows phosphatase activity on nucleoside 5'-monophosphates. This is 5'-nucleotidase SurE from Nitrosospira multiformis (strain ATCC 25196 / NCIMB 11849 / C 71).